The following is a 455-amino-acid chain: 3-isopropylmalate dehydratase large subunit (455 aa).

Cys-337, Cys-397, and Cys-400 together coordinate [4Fe-4S] cluster.

It belongs to the aconitase/IPM isomerase family. LeuC type 1 subfamily. In terms of assembly, heterodimer of LeuC and LeuD. The cofactor is [4Fe-4S] cluster.

It catalyses the reaction (2R,3S)-3-isopropylmalate = (2S)-2-isopropylmalate. It functions in the pathway amino-acid biosynthesis; L-leucine biosynthesis; L-leucine from 3-methyl-2-oxobutanoate: step 2/4. Its function is as follows. Catalyzes the isomerization between 2-isopropylmalate and 3-isopropylmalate, via the formation of 2-isopropylmaleate. This is 3-isopropylmalate dehydratase large subunit from Leuconostoc citreum (strain KM20).